The following is an 804-amino-acid chain: MSFDHQTIEKKWQDYWLKNKTFATREDKSKPKFYALDMFPYPSGAGLHVGHPEGYTATDILSRMKRMQGYNVLHPMGWDAFGLPAEQYALDTGNDPAVFTEQNIDNFRRQIRALGFSYDWDREVNTTDPDYYKWTQWIFLKLYEKGLAYVDEVPVNWCPALGTVLANEEVIDGKSERGGHPVERRPMKQWMLKITAYADRLLEDLEELDWPESIKEMQRNWIGRSEGAHVHFAVDGTNETFTVFTTRPDTLFGATYAVLAPEHDLVQKITTPEQKDAVNAYIEEVQSKSDLERTDLAKTKTGVFTGAYAVNPANGEKIPVWIADYVLATYGTGAVMAVPAHDERDHEFASAFGLPIKEVVKGGDVEKEAYTGDGEHIHSDFLNGLDKAAAIEKMIQWLEENGKGEKKVTYRLRDWLFSRQRYWGEPIPIIHWEDGTSTPVPEEELPLILPKTSEIKPSGTGESPLANIKEWVEVTDPETGKKGRRETNTMPQWAGSCWYFLRYIDPKNPNELASPEKLKEWLPVDMYIGGAEHAVLHLLYARFWHKFLYDIGVVPTKEPFKQLYNQGMILGENNEKMSKSKGNVVNPDEIVETHGADTLRLYEMFMGPLDASIAWSTTGLDGARRFLDRVWRLFIDDNGGLNEKIVEGAGETLERVYHETVMKVTDHFEGLRFNTGISQLMVFINEAYKADQLPKEYMEGFVKLLSPVAPHLAEELWNRLGHEETIAYEAWPVYDEAKLVDDEIEIVVQLNGKVKAKLNVPADADKEQLEELAKNNEKVKEQLEGKTIRKVIAVPGKLVNIVAN.

Residues 40–51 carry the 'HIGH' region motif; the sequence is PYPSGAGLHVGH. The 'KMSKS' region motif lies at 576 to 580; the sequence is KMSKS. An ATP-binding site is contributed by lysine 579.

The protein belongs to the class-I aminoacyl-tRNA synthetase family.

Its subcellular location is the cytoplasm. It carries out the reaction tRNA(Leu) + L-leucine + ATP = L-leucyl-tRNA(Leu) + AMP + diphosphate. The polypeptide is Leucine--tRNA ligase (Bacillus licheniformis (strain ATCC 14580 / DSM 13 / JCM 2505 / CCUG 7422 / NBRC 12200 / NCIMB 9375 / NCTC 10341 / NRRL NRS-1264 / Gibson 46)).